A 621-amino-acid polypeptide reads, in one-letter code: Protein Rep78 (621 aa).

One can recognise a PV NS1-Nuc domain in the interval 1–199; that stretch reads MPGFYEIVIK…AQHLTHVSQT (199 aa). Positions 83, 90, and 92 each coordinate a divalent metal cation. The RCR-2 signature appears at 90-92; the sequence is HMH. Residue Y156 is the For nuclease activity of the active site. Residues 156 to 160 carry the RCR-3 motif; it reads YLLPK. Residues 196–211 show a composition bias toward polar residues; that stretch reads VSQTQEQNKENQNPNS. The disordered stretch occupies residues 196-216; that stretch reads VSQTQEQNKENQNPNSDAPVI. Positions 308-463 constitute an SF3 helicase domain; sequence DPQYAASVFL…LDHDFGKVTK (156 aa). ATP is bound at residue 334-341; it reads GPATTGKT. The tract at residues 489–520 is disordered; that stretch reads GGAKKRPAPSDADISEPKRVRESVAQPSTSDA.

As to quaternary structure, hexamer when associated with the viral DNA ori sequence. Interacts with host PRKX. Interacts with host TOPORS. Interacts with host TBP and SUB1/PC4; these interactions play important roles in transcriptional regulation. A divalent metal cation is required as a cofactor.

The protein resides in the host nucleus. Its function is as follows. Plays an essential role in the initiation of viral DNA synthesis. Binds specifically to an inverted terminal repeat element (ITR) on the 3' and 5' ends of the viral DNA, where it cleaves a site specifically to generate a priming site for initiation of the synthesis of a complementary strand. Also plays a role as transcriptional regulator, DNA helicase and as key factors in site-specific integration of the viral genome. Regulates host PKA activity by interacting with host PRKX as a mechanism of interfering with helper virus propagation and promoting its own replication. Inhibits the host cell cycle G1/S, S and G2/M transitions. These arrests may provide essential cellular factors for viral DNA replication. This chain is Protein Rep78 (Rep78), found in Adeno-associated virus 2 (isolate Srivastava/1982) (AAV-2).